The primary structure comprises 241 residues: Thymidylate kinase (241 aa).

Residue 17–24 (GGEGAGKT) participates in ATP binding.

The protein belongs to the thymidylate kinase family.

The enzyme catalyses dTMP + ATP = dTDP + ADP. Phosphorylation of dTMP to form dTDP in both de novo and salvage pathways of dTTP synthesis. The sequence is that of Thymidylate kinase from Thermosynechococcus vestitus (strain NIES-2133 / IAM M-273 / BP-1).